We begin with the raw amino-acid sequence, 79 residues long: uncharacterized protein (79 aa).

Residues 15-37 form a helical membrane-spanning segment; that stretch reads KSIVSVLALTSLGCGVFVISATA.

The protein localises to the membrane. This is an uncharacterized protein from Dictyostelium discoideum (Social amoeba).